Consider the following 356-residue polypeptide: DNA polymerase IV (356 aa).

In terms of domain architecture, UmuC spans methionine 1 to glycine 188. 2 residues coordinate Mg(2+): aspartate 11 and aspartate 106. The active site involves glutamate 107.

The protein belongs to the DNA polymerase type-Y family. In terms of assembly, monomer. It depends on Mg(2+) as a cofactor.

The protein resides in the cytoplasm. The enzyme catalyses DNA(n) + a 2'-deoxyribonucleoside 5'-triphosphate = DNA(n+1) + diphosphate. Functionally, poorly processive, error-prone DNA polymerase involved in untargeted mutagenesis. Copies undamaged DNA at stalled replication forks, which arise in vivo from mismatched or misaligned primer ends. These misaligned primers can be extended by PolIV. Exhibits no 3'-5' exonuclease (proofreading) activity. May be involved in translesional synthesis, in conjunction with the beta clamp from PolIII. The protein is DNA polymerase IV of Listeria monocytogenes serovar 1/2a (strain ATCC BAA-679 / EGD-e).